A 246-amino-acid polypeptide reads, in one-letter code: Glucosamine-6-phosphate deaminase (246 aa).

Asp67 serves as the catalytic Proton acceptor; for enolization step. Asn136 acts as the For ring-opening step in catalysis. His138 functions as the Proton acceptor; for ring-opening step in the catalytic mechanism. Glu143 acts as the For ring-opening step in catalysis.

Belongs to the glucosamine/galactosamine-6-phosphate isomerase family. NagB subfamily.

It carries out the reaction alpha-D-glucosamine 6-phosphate + H2O = beta-D-fructose 6-phosphate + NH4(+). It participates in amino-sugar metabolism; N-acetylneuraminate degradation; D-fructose 6-phosphate from N-acetylneuraminate: step 5/5. Functionally, catalyzes the reversible isomerization-deamination of glucosamine 6-phosphate (GlcN6P) to form fructose 6-phosphate (Fru6P) and ammonium ion. The chain is Glucosamine-6-phosphate deaminase from Halalkalibacterium halodurans (strain ATCC BAA-125 / DSM 18197 / FERM 7344 / JCM 9153 / C-125) (Bacillus halodurans).